We begin with the raw amino-acid sequence, 144 residues long: 3-hydroxyacyl-[acyl-carrier-protein] dehydratase FabZ (144 aa).

Residue H49 is part of the active site.

The protein belongs to the thioester dehydratase family. FabZ subfamily.

The protein resides in the cytoplasm. It catalyses the reaction a (3R)-hydroxyacyl-[ACP] = a (2E)-enoyl-[ACP] + H2O. Functionally, involved in unsaturated fatty acids biosynthesis. Catalyzes the dehydration of short chain beta-hydroxyacyl-ACPs and long chain saturated and unsaturated beta-hydroxyacyl-ACPs. This Clostridium kluyveri (strain NBRC 12016) protein is 3-hydroxyacyl-[acyl-carrier-protein] dehydratase FabZ.